Consider the following 375-residue polypeptide: Anhydro-N-acetylmuramic acid kinase (375 aa).

12 to 19 (GTSLDGVD) is a binding site for ATP.

This sequence belongs to the anhydro-N-acetylmuramic acid kinase family.

It carries out the reaction 1,6-anhydro-N-acetyl-beta-muramate + ATP + H2O = N-acetyl-D-muramate 6-phosphate + ADP + H(+). It participates in amino-sugar metabolism; 1,6-anhydro-N-acetylmuramate degradation. It functions in the pathway cell wall biogenesis; peptidoglycan recycling. Catalyzes the specific phosphorylation of 1,6-anhydro-N-acetylmuramic acid (anhMurNAc) with the simultaneous cleavage of the 1,6-anhydro ring, generating MurNAc-6-P. Is required for the utilization of anhMurNAc either imported from the medium or derived from its own cell wall murein, and thus plays a role in cell wall recycling. This chain is Anhydro-N-acetylmuramic acid kinase, found in Variovorax paradoxus (strain S110).